We begin with the raw amino-acid sequence, 244 residues long: Probable hydrolase R7 (244 aa).

The N-terminal stretch at 1–20 (MTKPFILLVPGSFAPETIYA) is a signal peptide. Residues Asp-192 and His-224 each act as charge relay system in the active site. N-linked (GlcNAc...) asparagine glycosylation occurs at Asn-227.

Belongs to the AB hydrolase superfamily.

Its pathway is secondary metabolite biosynthesis. Its function is as follows. Probable hydrolase; part of the gene cluster that mediates the biosynthesis of squalestatin S1 (SQS1, also known as zaragozic acid A), a lead compound for the treatment of hyper-cholesterolemia by targeting squalene synthase (SS). Both phenylalanine and benzoic acid are known precursors of SQS1 and so it is unsurprising that the cluster also contains genes potentially involved in benzoate production such as phenyl-alanine ammonia lysase (PAL) M7, which catalyzes the first step in the degradation of phenylalanine, or the NADP-dependent dehydrogenase M3. The cluster contains two PKS encoding genes. The tetraketide synthase is responsible for the biosynthesis of the tetraketide sidechain of SQS1. The biosynthesis must involve 3 rounds of chain extension. After the first and second rounds methyl-transfer occurs, and in all rounds of extension the ketoreductase and dehydratase areactive. The enoyl reductase and C-MeT are not active in the final round of extension. The other PKS is therefore likely to encode squalestatin hexaketide synthase (SQHKS). The hexaketide main chain is initiated by benzoate which is an unusual starter unit for a highly reducing polyketide synthase. The cluster also contains a gene encoding a citrate synthase-like protein R3 presumably involved in linking the hexaketide to the oxaloacetate moiety. Formation of the tetraketide CoA may be catalyzed by the M9 CoA ligase, but the mechanism of release of the tetraketide and the hexaketide from their respective PKS remains unknown, although the cluster encodes a potential esterase (M8) and a possible hydrolase (M10) which could be involved in these processes. Two acyltransferases (AT), M4 and R4, are also encoded in the cluster. M4 is responsible for loading of the tetraketide sidechain from CoA onto the squalestatin core as the final step of biosynthesis. M4 appears to have a broad substrate selectivity for its acyl CoA substrate, allowing the in vitro synthesis of novel squalestatins. The biosynthesis of SQS1 requires several oxidative steps likely performed by oxidoreductases M1, R1 and R2. Finally, in support of the identification of the cluster as being responsible for SQS1 production, the cluster contains a gene encoding a putative squalene synthase (SS) R6, suggesting a likely mechanism for self-resistance. This Phoma sp. (strain ATCC 20986 / MF5453) protein is Probable hydrolase R7.